The following is a 226-amino-acid chain: NADH-quinone oxidoreductase subunit B 2 (226 aa).

Cys37, Cys38, Cys103, and Cys132 together coordinate [4Fe-4S] cluster.

Belongs to the complex I 20 kDa subunit family. In terms of assembly, NDH-1 is composed of 14 different subunits. Subunits NuoB, C, D, E, F, and G constitute the peripheral sector of the complex. The cofactor is [4Fe-4S] cluster.

Its subcellular location is the cell membrane. It carries out the reaction a quinone + NADH + 5 H(+)(in) = a quinol + NAD(+) + 4 H(+)(out). In terms of biological role, NDH-1 shuttles electrons from NADH, via FMN and iron-sulfur (Fe-S) centers, to quinones in the respiratory chain. The immediate electron acceptor for the enzyme in this species is believed to be a menaquinone. Couples the redox reaction to proton translocation (for every two electrons transferred, four hydrogen ions are translocated across the cytoplasmic membrane), and thus conserves the redox energy in a proton gradient. In Salinispora arenicola (strain CNS-205), this protein is NADH-quinone oxidoreductase subunit B 2.